The sequence spans 179 residues: uncharacterized protein (179 aa).

Residues 21 to 109 (QQDAVILVDV…WKQAGLPTVK (89 aa)) enclose the Rhodanese domain. Helical transmembrane passes span 115–135 (ISIM…GVLL) and 138–158 (FVAP…LFAG).

It is found in the cell membrane. This is an uncharacterized protein from Synechocystis sp. (strain ATCC 27184 / PCC 6803 / Kazusa).